The primary structure comprises 196 residues: uncharacterized protein (196 aa).

Residues 20–40 (GALALGCIALLLMGIVGCTTV) traverse the membrane as a helical segment.

The protein localises to the membrane. This is an uncharacterized protein from Mycobacterium tuberculosis (strain CDC 1551 / Oshkosh).